A 283-amino-acid chain; its full sequence is Protein/nucleic acid deglycase HchA (283 aa).

The Zn(2+) site is built by His86, Glu91, and His123. Cys185 acts as the Nucleophile in catalysis.

This sequence belongs to the peptidase C56 family. HchA subfamily. Homodimer.

The protein localises to the cytoplasm. The catalysed reaction is N(omega)-(1-hydroxy-2-oxopropyl)-L-arginyl-[protein] + H2O = lactate + L-arginyl-[protein] + H(+). It catalyses the reaction N(6)-(1-hydroxy-2-oxopropyl)-L-lysyl-[protein] + H2O = lactate + L-lysyl-[protein] + H(+). It carries out the reaction S-(1-hydroxy-2-oxopropyl)-L-cysteinyl-[protein] + H2O = lactate + L-cysteinyl-[protein] + H(+). The enzyme catalyses N(omega)-(1-hydroxy-2-oxoethyl)-L-arginyl-[protein] + H2O = L-arginyl-[protein] + glycolate + H(+). The catalysed reaction is N(6)-(1-hydroxy-2-oxoethyl)-L-lysyl-[protein] + H2O = glycolate + L-lysyl-[protein] + H(+). It catalyses the reaction S-(1-hydroxy-2-oxoethyl)-L-cysteinyl-[protein] + H2O = glycolate + L-cysteinyl-[protein] + H(+). It carries out the reaction N(2)-(1-hydroxy-2-oxopropyl)-dGTP + H2O = lactate + dGTP + H(+). The enzyme catalyses N(2)-(1-hydroxy-2-oxopropyl)-GTP + H2O = lactate + GTP + H(+). The catalysed reaction is N(2)-(1-hydroxy-2-oxopropyl)-GDP + H2O = lactate + GDP + H(+). It catalyses the reaction N(2)-(1-hydroxy-2-oxopropyl)-GMP + H2O = lactate + GMP + H(+). It carries out the reaction N(2)-(1-hydroxy-2-oxoethyl)-dGTP + H2O = dGTP + glycolate + H(+). The enzyme catalyses N(2)-(1-hydroxy-2-oxoethyl)-GTP + H2O = glycolate + GTP + H(+). The catalysed reaction is N(2)-(1-hydroxy-2-oxoethyl)-GDP + H2O = glycolate + GDP + H(+). It catalyses the reaction N(2)-(1-hydroxy-2-oxoethyl)-GMP + H2O = glycolate + GMP + H(+). It carries out the reaction an N(2)-(1-hydroxy-2-oxopropyl)-guanosine in RNA + H2O = a guanosine in RNA + lactate + H(+). The enzyme catalyses an N(2)-(1-hydroxy-2-oxopropyl)-2'-deoxyguanosine in DNA + H2O = a 2'-deoxyguanosine in DNA + lactate + H(+). The catalysed reaction is an N(2)-(1-hydroxy-2-oxoethyl)-guanosine in RNA + H2O = a guanosine in RNA + glycolate + H(+). It catalyses the reaction an N(2)-(1-hydroxy-2-oxoethyl)-2'-deoxyguanosine in DNA + H2O = a 2'-deoxyguanosine in DNA + glycolate + H(+). Its function is as follows. Protein and nucleotide deglycase that catalyzes the deglycation of the Maillard adducts formed between amino groups of proteins or nucleotides and reactive carbonyl groups of glyoxals. Thus, functions as a protein deglycase that repairs methylglyoxal- and glyoxal-glycated proteins, and releases repaired proteins and lactate or glycolate, respectively. Deglycates cysteine, arginine and lysine residues in proteins, and thus reactivates these proteins by reversing glycation by glyoxals. Acts on early glycation intermediates (hemithioacetals and aminocarbinols), preventing the formation of Schiff bases and advanced glycation endproducts (AGE). Also functions as a nucleotide deglycase able to repair glycated guanine in the free nucleotide pool (GTP, GDP, GMP, dGTP) and in DNA and RNA. Is thus involved in a major nucleotide repair system named guanine glycation repair (GG repair), dedicated to reversing methylglyoxal and glyoxal damage via nucleotide sanitization and direct nucleic acid repair. Plays an important role in protecting cells from carbonyl stress. The sequence is that of Protein/nucleic acid deglycase HchA from Escherichia coli O139:H28 (strain E24377A / ETEC).